The sequence spans 915 residues: Isoleucine--tRNA ligase (915 aa).

Residues 64–74 (PYANGNFHVGH) carry the 'HIGH' region motif. E557 contributes to the L-isoleucyl-5'-AMP binding site. Residues 598-602 (AMSKS) carry the 'KMSKS' region motif. An ATP-binding site is contributed by K601. Positions 887, 890, 902, and 905 each coordinate Zn(2+).

The protein belongs to the class-I aminoacyl-tRNA synthetase family. IleS type 1 subfamily. As to quaternary structure, monomer. It depends on Zn(2+) as a cofactor.

The protein localises to the cytoplasm. The catalysed reaction is tRNA(Ile) + L-isoleucine + ATP = L-isoleucyl-tRNA(Ile) + AMP + diphosphate. Functionally, catalyzes the attachment of isoleucine to tRNA(Ile). As IleRS can inadvertently accommodate and process structurally similar amino acids such as valine, to avoid such errors it has two additional distinct tRNA(Ile)-dependent editing activities. One activity is designated as 'pretransfer' editing and involves the hydrolysis of activated Val-AMP. The other activity is designated 'posttransfer' editing and involves deacylation of mischarged Val-tRNA(Ile). This is Isoleucine--tRNA ligase from Leptospira biflexa serovar Patoc (strain Patoc 1 / ATCC 23582 / Paris).